Here is a 499-residue protein sequence, read N- to C-terminus: Hepatic triacylglycerol lipase (499 aa).

A signal peptide spans 1–21 (MGSPLCVPIFLAVCILIQSST). N78 is a glycosylation site (N-linked (GlcNAc...) asparagine). Catalysis depends on S168, which acts as the Nucleophile. D194 acts as the Charge relay system in catalysis. The essential for determining substrate specificity stretch occupies residues 254 to 277 (CHFLELYKHIAQHGLNALSQTIKC). The active-site Charge relay system is the H279. In terms of domain architecture, PLAT spans 352-486 (YHYQFKIQFI…HPTQEKNFVR (135 aa)). N-linked (GlcNAc...) asparagine glycosylation occurs at N397.

Belongs to the AB hydrolase superfamily. Lipase family. In terms of assembly, homodimer.

Its subcellular location is the secreted. The enzyme catalyses a triacylglycerol + H2O = a diacylglycerol + a fatty acid + H(+). The catalysed reaction is a 1-acyl-sn-glycero-3-phosphocholine + H2O = sn-glycerol 3-phosphocholine + a fatty acid + H(+). It catalyses the reaction a 1,2-diacyl-sn-glycero-3-phosphocholine + H2O = a 2-acyl-sn-glycero-3-phosphocholine + a fatty acid + H(+). It carries out the reaction 1,2,3-tri-(9Z-octadecenoyl)-glycerol + H2O = di-(9Z)-octadecenoylglycerol + (9Z)-octadecenoate + H(+). The enzyme catalyses 1,2-di-(9Z-octadecenoyl)-sn-glycero-3-phosphocholine + H2O = (9Z-octadecenoyl)-sn-glycero-3-phosphocholine + (9Z)-octadecenoate + H(+). The catalysed reaction is 1,2,3-tributanoylglycerol + H2O = dibutanoylglycerol + butanoate + H(+). It catalyses the reaction 1,2-dihexadecanoyl-sn-glycero-3-phosphocholine + H2O = hexadecanoyl-sn-glycero-3-phosphocholine + hexadecanoate + H(+). It carries out the reaction 1,2-di-(9Z-octadecenoyl)-sn-glycerol + H2O = 2-(9Z-octadecenoyl)-glycerol + (9Z)-octadecenoate + H(+). The enzyme catalyses 1,2,3-tri-(9Z-octadecenoyl)-glycerol + H2O = 2,3-di-(9Z)-octadecenoyl-sn-glycerol + (9Z)-octadecenoate + H(+). The catalysed reaction is 1-(9Z-octadecenoyl)-sn-glycero-3-phospho-L-serine + H2O = sn-glycero-3-phospho-L-serine + (9Z)-octadecenoate + H(+). It catalyses the reaction 1-hexadecanoyl-sn-glycero-3-phosphocholine + H2O = sn-glycerol 3-phosphocholine + hexadecanoate + H(+). It carries out the reaction 1,3-di-(9Z-octadecenoyl)-glycerol + H2O = 3-(9Z-octadecenoyl)-sn-glycerol + (9Z)-octadecenoate + H(+). Its function is as follows. Catalyzes the hydrolysis of triglycerides and phospholipids present in circulating plasma lipoproteins, including chylomicrons, intermediate density lipoproteins (IDL), low density lipoproteins (LDL) of large size and high density lipoproteins (HDL), releasing free fatty acids (FFA) and smaller lipoprotein particles. Also exhibits lysophospholipase activity. Can hydrolyze both neutral lipid and phospholipid substrates but shows a greater binding affinity for neutral lipid substrates than phospholipid substrates. In native LDL, preferentially hydrolyzes the phosphatidylcholine species containing polyunsaturated fatty acids at sn-2 position. This is Hepatic triacylglycerol lipase (LIPC) from Oryctolagus cuniculus (Rabbit).